A 318-amino-acid polypeptide reads, in one-letter code: MAAGTAFAVDHAQIAQTGDTMFKGYLEPEQAKDYFAEAEKTSIVQQFAQKVPMGTTGQKIPHWVGDVSAQWIGEGDMKPITKGNMTSQTIAPHKIATIFVASAETVRANPANYLGTMRTKVATAFAMAFDGAAMHGTDSPFPTYIGQTTKAISIADTTGATTVYDQVAVNGLSLLVNDGKKWTHTLLDDITEPILNGAKDQNGRPLFIESTYGEAASPFRSGRIVARPTILSDHVVEGTTVGFMGDFSQLIWGQIGGLSFDVTDQATLNLGTVESPNFVSLWQHNLVAVRVEAEYAFHCNDAEAFVALTNVVSGGGEG.

Belongs to the L5likevirus major capsid protein gp17 family.

Its subcellular location is the virion. In Mycobacterium (Mycobacteriophage D29), this protein is Probable major capsid protein gp17 (17).